Reading from the N-terminus, the 339-residue chain is Ketol-acid reductoisomerase (NADP(+)) (339 aa).

The 182-residue stretch at 1-182 folds into the KARI N-terminal Rossmann domain; the sequence is MRVYYDRDAD…GGGRAGIIET (182 aa). NADP(+) is bound by residues 24–27, Arg48, Ser51, Thr53, and 83–86; these read YGSQ and DELQ. Residue His108 is part of the active site. Gly134 serves as a coordination point for NADP(+). Residues 183 to 328 enclose the KARI C-terminal knotted domain; sequence TFKEECETDL…AELRAMMPWI (146 aa). 4 residues coordinate Mg(2+): Asp191, Glu195, Glu227, and Glu231. Ser252 is a binding site for substrate.

Belongs to the ketol-acid reductoisomerase family. Mg(2+) is required as a cofactor.

The catalysed reaction is (2R)-2,3-dihydroxy-3-methylbutanoate + NADP(+) = (2S)-2-acetolactate + NADPH + H(+). The enzyme catalyses (2R,3R)-2,3-dihydroxy-3-methylpentanoate + NADP(+) = (S)-2-ethyl-2-hydroxy-3-oxobutanoate + NADPH + H(+). It participates in amino-acid biosynthesis; L-isoleucine biosynthesis; L-isoleucine from 2-oxobutanoate: step 2/4. Its pathway is amino-acid biosynthesis; L-valine biosynthesis; L-valine from pyruvate: step 2/4. Its function is as follows. Involved in the biosynthesis of branched-chain amino acids (BCAA). Catalyzes an alkyl-migration followed by a ketol-acid reduction of (S)-2-acetolactate (S2AL) to yield (R)-2,3-dihydroxy-isovalerate. In the isomerase reaction, S2AL is rearranged via a Mg-dependent methyl migration to produce 3-hydroxy-3-methyl-2-ketobutyrate (HMKB). In the reductase reaction, this 2-ketoacid undergoes a metal-dependent reduction by NADPH to yield (R)-2,3-dihydroxy-isovalerate. The protein is Ketol-acid reductoisomerase (NADP(+)) of Beijerinckia indica subsp. indica (strain ATCC 9039 / DSM 1715 / NCIMB 8712).